The sequence spans 93 residues: Small ribosomal subunit protein uS19m (93 aa).

The protein belongs to the universal ribosomal protein uS19 family.

Its subcellular location is the mitochondrion. This is Small ribosomal subunit protein uS19m (RPS19) from Marchantia polymorpha (Common liverwort).